Consider the following 183-residue polypeptide: MKLLEKITSYEFICKMVDIYNKFVNFVAILMIPILMLTLLIAIAIIFYDLRLFVDYFLHGAVAEEYDKAFKLLVRNILNFFVLIELFKVFIDVLEFRRIRKRQIIEAGIVFVVREIILIVFEHRFTFWDLLGFGALLLALGLTYVLLEKSYMEYLKFEHREITKRERSERESLKEQRKGELKR.

4 helical membrane-spanning segments follow: residues 26–48 (FVAI…IIFY), 72–91 (LLVR…KVFI), 104–121 (IIEA…LIVF), and 125–147 (FTFW…YVLL).

The protein localises to the cell membrane. This is an uncharacterized protein from Aquifex aeolicus (strain VF5).